The primary structure comprises 391 residues: Ferrochelatase (391 aa).

Residues H196 and E281 each coordinate Fe cation.

The protein belongs to the ferrochelatase family.

It is found in the cytoplasm. The enzyme catalyses heme b + 2 H(+) = protoporphyrin IX + Fe(2+). It functions in the pathway porphyrin-containing compound metabolism; protoheme biosynthesis; protoheme from protoporphyrin-IX: step 1/1. Functionally, catalyzes the ferrous insertion into protoporphyrin IX. The sequence is that of Ferrochelatase from Prochlorococcus marinus (strain NATL1A).